The sequence spans 357 residues: Peptide chain release factor 1 (357 aa).

Residue Q234 is modified to N5-methylglutamine.

This sequence belongs to the prokaryotic/mitochondrial release factor family. Methylated by PrmC. Methylation increases the termination efficiency of RF1.

The protein resides in the cytoplasm. Peptide chain release factor 1 directs the termination of translation in response to the peptide chain termination codons UAG and UAA. The sequence is that of Peptide chain release factor 1 from Frankia casuarinae (strain DSM 45818 / CECT 9043 / HFP020203 / CcI3).